A 514-amino-acid polypeptide reads, in one-letter code: MNIQEEIKKRRTFAIISHPDAGKTTITEQLLYFGGEIREAGTVKGKKTGTFAKSDWMDIEKQRGISVTSSVMQFDYDGKRVNILDTPGHEDFSEDTYRTLMAVDAAVMVVDSAKGIEAQTKKLFEVVKHRGIPVFTFMNKLDRDGREPLDLLQELEEILGIASYPMNWPIGMGKAFEGLYDLYNQRLELYKGDERFASLEDGDKLFGSNPFYEQVKDDIELLNEAGNEFSEEAILAGELTPVFFGSALTNFGVQTFLEIFLKFAPEPHGHKKTDGEIVDPYDKDFSGFVFKIQANMDPRHRDRIAFVRIVSGEFERGMSVNLPRTGKGAKLSNVTQFMAESRENVTNAVSGDIIGVYDTGTYQVGDTLTVGKNKFEFEPLPTFTPEIFMKVSAKNVMKQKSFHKGIEQLVQEGAVQLYKNYQTGEYMLGAVGQLQFEVFKHRMEGEYNAEVVMTPMGKKTVRWIKPEDLDERMSSSRNILAKDRFDQPVFLFENDFALRWFADKYPDVELEEKM.

Residues 8–268 (KKRRTFAIIS…IFLKFAPEPH (261 aa)) form the tr-type G domain. GTP is bound by residues 17 to 24 (SHPDAGKT), 85 to 89 (DTPGH), and 139 to 142 (NKLD).

This sequence belongs to the TRAFAC class translation factor GTPase superfamily. Classic translation factor GTPase family. PrfC subfamily.

It localises to the cytoplasm. Functionally, increases the formation of ribosomal termination complexes and stimulates activities of RF-1 and RF-2. It binds guanine nucleotides and has strong preference for UGA stop codons. It may interact directly with the ribosome. The stimulation of RF-1 and RF-2 is significantly reduced by GTP and GDP, but not by GMP. This chain is Peptide chain release factor 3, found in Streptococcus pneumoniae (strain 70585).